We begin with the raw amino-acid sequence, 75 residues long: UPF0346 protein LJ_1103 (75 aa).

This sequence belongs to the UPF0346 family.

This is UPF0346 protein LJ_1103 from Lactobacillus johnsonii (strain CNCM I-12250 / La1 / NCC 533).